Reading from the N-terminus, the 388-residue chain is Succinate--CoA ligase [ADP-forming] subunit beta (388 aa).

Positions 9 to 244 constitute an ATP-grasp domain; sequence KQLFAEYGLP…PSQDDPREAH (236 aa). ATP contacts are provided by residues K46, 53-55, E99, T102, and E107; that span reads GRG. Mg(2+) contacts are provided by N199 and D213. Substrate contacts are provided by residues N264 and 321–323; that span reads GIV.

It belongs to the succinate/malate CoA ligase beta subunit family. In terms of assembly, heterotetramer of two alpha and two beta subunits. It depends on Mg(2+) as a cofactor.

The enzyme catalyses succinate + ATP + CoA = succinyl-CoA + ADP + phosphate. The catalysed reaction is GTP + succinate + CoA = succinyl-CoA + GDP + phosphate. Its pathway is carbohydrate metabolism; tricarboxylic acid cycle; succinate from succinyl-CoA (ligase route): step 1/1. Functionally, succinyl-CoA synthetase functions in the citric acid cycle (TCA), coupling the hydrolysis of succinyl-CoA to the synthesis of either ATP or GTP and thus represents the only step of substrate-level phosphorylation in the TCA. The beta subunit provides nucleotide specificity of the enzyme and binds the substrate succinate, while the binding sites for coenzyme A and phosphate are found in the alpha subunit. In Pseudomonas fluorescens (strain Pf0-1), this protein is Succinate--CoA ligase [ADP-forming] subunit beta.